The sequence spans 797 residues: Trafficking protein particle complex subunit 12 (797 aa).

Disordered regions lie at residues 1 to 257 (META…PSLS) and 286 to 338 (SNPN…VPES). Residues 9 to 23 (QSPSEASPSAQAGPE) show a composition bias toward low complexity. Basic and acidic residues predominate over residues 29 to 43 (MSREEESQPLYHEET). Positions 47-58 (GGDEFASEENEP) are enriched in acidic residues. Basic and acidic residues-rich tracts occupy residues 66 to 75 (FGDKLNEHMM) and 107 to 121 (ATDH…KEVV). Ser-125 and Ser-128 each carry phosphoserine. Phosphothreonine is present on Thr-130. Over residues 173-185 (VGPKDSLAPREEQ) the composition is skewed to basic and acidic residues. The span at 206–216 (IFSQATATPSQ) shows a compositional bias: polar residues. The segment covering 232–244 (SPSFSSTSETSAK) has biased composition (low complexity). Phosphoserine is present on residues Ser-234, Ser-309, and Ser-314. TPR repeat units lie at residues 607–640 (GRVL…YPEQ), 642–675 (PQLL…TQKL), 682–715 (IMVL…DPTN), and 716–749 (AVAN…DPRH).

Component of the multisubunit TRAPP (transport protein particle) complex, which includes at least TRAPPC2, TRAPPC2L, TRAPPC3, TRAPPC3L, TRAPPC4, TRAPPC5, TRAPPC8, TRAPPC9, TRAPPC10, TRAPPC11 and TRAPPC12. Interacts with CENPE. Post-translationally, phosphorylated as the cells enter mitosis but is dephosphorylated at or before the onset of anaphase. The phosphorylated form recruits CENPE to kinetochores more efficiently than the non-phosphorylated form.

Its subcellular location is the endoplasmic reticulum-Golgi intermediate compartment. It localises to the nucleus. Its function is as follows. Component of the TRAPP complex, which is involved in endoplasmic reticulum to Golgi apparatus trafficking at a very early stage. Also plays a role in chromosome congression, kinetochore assembly and stability and controls the recruitment of CENPE to the kinetochores. The sequence is that of Trafficking protein particle complex subunit 12 from Mus musculus (Mouse).